The following is a 1705-amino-acid chain: Receptor-type tyrosine-protein phosphatase V (1705 aa).

The signal sequence occupies residues 1-18 (MRPLILLAALLWLQDSLA). Residues 19 to 1077 (QEDVCSSLDG…QASISLVAMP (1059 aa)) lie on the Extracellular side of the membrane. Residues 24-44 (SSLDGSPDRQGGGPPLSVSVT) form a disordered region. Fibronectin type-III domains follow at residues 37–129 (PPLS…TAPT), 130–222 (VVRG…VPPD), 218–305 (PVPP…EWTY), 306–388 (PSYP…SIWL), 393–454 (ARPM…HYRV), 475–569 (PPQS…APPT), 565–654 (PAPP…TGWT), 655–749 (PPSA…TPNE), 744–831 (PLTP…VLSV), and 832–926 (EPGP…SAEV). 15 N-linked (GlcNAc...) asparagine glycosylation sites follow: N74, N89, N117, N174, N239, N259, N299, N345, N431, N551, N570, N620, N649, N663, and N737. N851, N882, N970, and N982 each carry an N-linked (GlcNAc...) asparagine glycan. Residues 1078–1100 (LTVMMGTVVGCIIIVCAVLCLLC) traverse the membrane as a helical segment. At 1101 to 1705 (RRGLKGPRSE…LRNRLPRARK (605 aa)) the chain is on the cytoplasmic side. Tyrosine-protein phosphatase domains are found at residues 1150-1409 (FFQE…LLNK) and 1427-1695 (NFAQ…LNSA). Substrate is bound by residues D1316, 1350–1356 (CSAGVGR), and Q1394. C1350 acts as the Phosphocysteine intermediate in catalysis.

This sequence belongs to the protein-tyrosine phosphatase family. Receptor class 3 subfamily.

The protein localises to the membrane. It carries out the reaction O-phospho-L-tyrosyl-[protein] + H2O = L-tyrosyl-[protein] + phosphate. Functionally, protein tyrosine phosphatase that acts as a regulator of energy metabolism by mediating dephosphorylation of insulin receptor (Insr). Prevents decarboxylation of osteocalcin (Bglap and Bglap2) via an indirect mechanism: dephosphorylation of insulin receptor prevents insulin signaling-dependent decarboxylation of osteocalcin, preventing the hormone activity of osteocalcin. May play a role in the maintenance of pluripotency. The protein is Receptor-type tyrosine-protein phosphatase V (Ptprv) of Mus musculus (Mouse).